A 118-amino-acid polypeptide reads, in one-letter code: UPF0102 protein Csac_2148 (118 aa).

It belongs to the UPF0102 family.

This is UPF0102 protein Csac_2148 from Caldicellulosiruptor saccharolyticus (strain ATCC 43494 / DSM 8903 / Tp8T 6331).